A 439-amino-acid polypeptide reads, in one-letter code: Ribosomal protein uS12 methylthiotransferase RimO (439 aa).

The 113-residue stretch at 7–119 folds into the MTTase N-terminal domain; sequence KQLCLISLGC…IDILIAKKQN (113 aa). The [4Fe-4S] cluster site is built by Cys16, Cys50, Cys82, Cys151, Cys155, and Cys158. A Radical SAM core domain is found at 137 to 368; that stretch reads TGSSVHAYVK…ALKHQNHSFK (232 aa).

It belongs to the methylthiotransferase family. RimO subfamily. The cofactor is [4Fe-4S] cluster.

Its subcellular location is the cytoplasm. The catalysed reaction is L-aspartate(89)-[ribosomal protein uS12]-hydrogen + (sulfur carrier)-SH + AH2 + 2 S-adenosyl-L-methionine = 3-methylsulfanyl-L-aspartate(89)-[ribosomal protein uS12]-hydrogen + (sulfur carrier)-H + 5'-deoxyadenosine + L-methionine + A + S-adenosyl-L-homocysteine + 2 H(+). Catalyzes the methylthiolation of an aspartic acid residue of ribosomal protein uS12. This Helicobacter pylori (strain HPAG1) protein is Ribosomal protein uS12 methylthiotransferase RimO.